The sequence spans 332 residues: MAQVWKDAEISLDPIKDQTVAVIGYGIQGDAQANNMKDSGLKVVVGLKEGGSSWKKAASDGHRVLTVAEACKEADIIHVLVPDMIQAQLYRDEMGPNISKGKALSFSHAAAIHWKWIEAPSDVDVIMVAPKGPGSKVRETYLEGFGTPSIVAVEQDSTGGAWDRTLGLGKAIGSARAGLIKTTFKEEVETDWFGEQADLCGGSATMVVSAFETLVEAGYQPEIAYFEVLHELKLIVDMIQKYGINGMWRRVSETARYGGLTRGPMVMDSHTKERMGKVLKEIQDGTFNEEWVSSYRKDGRDAFDKYMKELDSHQIEQVGRKMRKMMWPDSTE.

The region spanning 1–182 is the KARI N-terminal Rossmann domain; sequence MAQVWKDAEI…GSARAGLIKT (182 aa). NADP(+) is bound by residues 25–28, Lys-48, Ser-53, and 83–86; these read YGIQ and DMIQ. His-108 is an active-site residue. Position 134 (Gly-134) interacts with NADP(+). A KARI C-terminal knotted domain is found at 183–329; that stretch reads TFKEEVETDW…RKMRKMMWPD (147 aa). Asp-191, Glu-195, Glu-227, and Glu-231 together coordinate Mg(2+). Residue Ser-252 participates in substrate binding.

It belongs to the ketol-acid reductoisomerase family. Requires Mg(2+) as cofactor.

The enzyme catalyses (2R)-2,3-dihydroxy-3-methylbutanoate + NADP(+) = (2S)-2-acetolactate + NADPH + H(+). It carries out the reaction (2R,3R)-2,3-dihydroxy-3-methylpentanoate + NADP(+) = (S)-2-ethyl-2-hydroxy-3-oxobutanoate + NADPH + H(+). The protein operates within amino-acid biosynthesis; L-isoleucine biosynthesis; L-isoleucine from 2-oxobutanoate: step 2/4. It participates in amino-acid biosynthesis; L-valine biosynthesis; L-valine from pyruvate: step 2/4. Involved in the biosynthesis of branched-chain amino acids (BCAA). Catalyzes an alkyl-migration followed by a ketol-acid reduction of (S)-2-acetolactate (S2AL) to yield (R)-2,3-dihydroxy-isovalerate. In the isomerase reaction, S2AL is rearranged via a Mg-dependent methyl migration to produce 3-hydroxy-3-methyl-2-ketobutyrate (HMKB). In the reductase reaction, this 2-ketoacid undergoes a metal-dependent reduction by NADPH to yield (R)-2,3-dihydroxy-isovalerate. This chain is Ketol-acid reductoisomerase (NADP(+)), found in Cenarchaeum symbiosum (strain A).